Reading from the N-terminus, the 217-residue chain is E3 ubiquitin-protein ligase znrf2 (217 aa).

Disordered regions lie at residues 1–27 (MGAKQSSPAANGRTRAYSGSDLPSATA) and 63–111 (QFIS…ERST). Glycine 2 carries N-myristoyl glycine lipidation. The span at 68 to 100 (RTRSVGPSARPQSGINIPNSGAYSSADSGNSTP) shows a compositional bias: polar residues. Residues 174-215 (CAICLEELLQGDTIARLPCLCIYHKGCIDEWFEVNRSCPEHP) form an RING-type; atypical zinc finger.

The protein localises to the endosome membrane. It localises to the lysosome membrane. It is found in the presynaptic cell membrane. It catalyses the reaction S-ubiquitinyl-[E2 ubiquitin-conjugating enzyme]-L-cysteine + [acceptor protein]-L-lysine = [E2 ubiquitin-conjugating enzyme]-L-cysteine + N(6)-ubiquitinyl-[acceptor protein]-L-lysine.. It functions in the pathway protein modification; protein ubiquitination. Its function is as follows. May play a role in the establishment and maintenance of neuronal transmission and plasticity via its ubiquitin ligase activity. E3 ubiquitin ligases accept ubiquitin from an E2 ubiquitin-conjugating enzyme in the form of a thioester and then directly transfer the ubiquitin to targeted substrates. In Danio rerio (Zebrafish), this protein is E3 ubiquitin-protein ligase znrf2 (znrf2).